The primary structure comprises 393 residues: tRNA(Met) cytidine acetate ligase (393 aa).

Gly81, Asn142, and Arg167 together coordinate ATP.

It belongs to the TmcAL family.

It localises to the cytoplasm. It carries out the reaction cytidine(34) in elongator tRNA(Met) + acetate + ATP = N(4)-acetylcytidine(34) in elongator tRNA(Met) + AMP + diphosphate. Catalyzes the formation of N(4)-acetylcytidine (ac(4)C) at the wobble position of elongator tRNA(Met), using acetate and ATP as substrates. First activates an acetate ion to form acetyladenylate (Ac-AMP) and then transfers the acetyl group to tRNA to form ac(4)C34. In Bacillus anthracis (strain A0248), this protein is tRNA(Met) cytidine acetate ligase.